Reading from the N-terminus, the 969-residue chain is Integrator complex subunit 4 (969 aa).

HEAT repeat units follow at residues 68–107 (AESVEGVVRILLEHYYKENDTSVRLKIASLLGLLSKTAGF), 147–185 (VSHRMRLVDVACKHLSDTSHGVRNKCLQLLGCLGSVEAS), 192–230 (NAVAKDVQKIIGDYFIDQDPRVRTAAIKAMLQLHERGLK), 231–265 (LQQAMYNQACKLLTDDYEQVRSAAVELSWVLSQLY), 279–315 (IRLVDDAFGKVCHMVSDGSWVVRVQACKLLGSMLQVS), 371–407 (NLIDSGACGAFVHGLEDEMYEVRIAAVESLCLLARSS), 408–446 (APFAEKCLDFLVDMFNDEIEEVRLQSIHTMRKISDNITL), and 448–486 (EDQLDTVLAVLEDKSRDIREALHELLCCTNVSTKECIQL). Over residues 928–949 (RASNSTWGESTETVPSTESSTE) the composition is skewed to low complexity. The segment at 928 to 950 (RASNSTWGESTETVPSTESSTEG) is disordered.

This sequence belongs to the Integrator subunit 4 family. In terms of assembly, component of the Integrator complex, composed of core subunits INTS1, INTS2, INTS3, INTS4, INTS5, INTS6, INTS7, INTS8, INTS9/RC74, INTS10, INTS11/CPSF3L, INTS12, INTS13, INTS14 and INTS15. The core complex associates with protein phosphatase 2A subunits PPP2CA and PPP2R1A, to form the Integrator-PP2A (INTAC) complex. INTS4 is part of the RNA endonuclease subcomplex, composed of INTS4, INTS9, INTS11 and inositol hexakisphosphate (InsP6).

The protein localises to the nucleus. It localises to the cytoplasm. Its function is as follows. Component of the integrator complex, a multiprotein complex that terminates RNA polymerase II (Pol II) transcription in the promoter-proximal region of genes. The integrator complex provides a quality checkpoint during transcription elongation by driving premature transcription termination of transcripts that are unfavorably configured for transcriptional elongation: the complex terminates transcription by (1) catalyzing dephosphorylation of the C-terminal domain (CTD) of Pol II subunit POLR2A/RPB1 and SUPT5H/SPT5, (2) degrading the exiting nascent RNA transcript via endonuclease activity and (3) promoting the release of Pol II from bound DNA. The integrator complex is also involved in terminating the synthesis of non-coding Pol II transcripts, such as enhancer RNAs (eRNAs), small nuclear RNAs (snRNAs), telomerase RNAs and long non-coding RNAs (lncRNAs). In Xenopus laevis (African clawed frog), this protein is Integrator complex subunit 4 (ints4).